The sequence spans 95 residues: Leukocyte-specific transcript 1 protein (95 aa).

The helical transmembrane segment at 22–42 (LGLGGLLLLLVIILFICLCGF) threads the bilayer. A Phosphoserine modification is found at Ser-64.

This sequence belongs to the LST1 family. Expressed in spleen and at lower levels in thymus and liver.

Its subcellular location is the membrane. In terms of biological role, possible role in modulating immune responses. Has an inhibitory effect on lymphocyte proliferation. Induces morphological changes including production of filopodia and microspikes when overexpressed in a variety of cell types and may be involved in dendritic cell maturation. The sequence is that of Leukocyte-specific transcript 1 protein (Lst1) from Mus musculus (Mouse).